The chain runs to 184 residues: ATP synthase subunit b, chloroplastic (184 aa).

A helical transmembrane segment spans residues 31–53; sequence LINLAVVIGVLVYFGKGVLTTIL.

This sequence belongs to the ATPase B chain family. As to quaternary structure, F-type ATPases have 2 components, F(1) - the catalytic core - and F(0) - the membrane proton channel. F(1) has five subunits: alpha(3), beta(3), gamma(1), delta(1), epsilon(1). F(0) has four main subunits: a(1), b(1), b'(1) and c(10-14). The alpha and beta chains form an alternating ring which encloses part of the gamma chain. F(1) is attached to F(0) by a central stalk formed by the gamma and epsilon chains, while a peripheral stalk is formed by the delta, b and b' chains.

Its subcellular location is the plastid. The protein resides in the chloroplast thylakoid membrane. Functionally, f(1)F(0) ATP synthase produces ATP from ADP in the presence of a proton or sodium gradient. F-type ATPases consist of two structural domains, F(1) containing the extramembraneous catalytic core and F(0) containing the membrane proton channel, linked together by a central stalk and a peripheral stalk. During catalysis, ATP synthesis in the catalytic domain of F(1) is coupled via a rotary mechanism of the central stalk subunits to proton translocation. Component of the F(0) channel, it forms part of the peripheral stalk, linking F(1) to F(0). This is ATP synthase subunit b, chloroplastic from Staurastrum punctulatum (Green alga).